Reading from the N-terminus, the 25-residue chain is Pregnancy-associated glycoprotein 72 (25 aa).

N-linked (GlcNAc...) asparagine glycans are attached at residues N4 and N21.

It belongs to the peptidase A1 family. Post-translationally, N-glycosylated. Expressed in chorionic epithelium (trophectoderm).

The protein resides in the secreted. The protein localises to the extracellular space. The polypeptide is Pregnancy-associated glycoprotein 72 (Bison bison (American bison)).